The following is a 99-amino-acid chain: Protein S100-Z (99 aa).

EF-hand domains lie at 13 to 48 (ITVF…FLMS) and 50 to 85 (KDPM…LTVA). Ca(2+) contacts are provided by S20, E23, D25, K28, E33, D63, N65, D67, E69, and E74.

Belongs to the S-100 family. As to quaternary structure, homodimer. Homodimers may assemble into larger stable oligomers. As to expression, in larva at 5 days post-fertilization, shows very restricted expression only in a few large cells of the olfactory placode. More widely expressed in the adult. Expressed at higher levels in gut than in spleen, head kidney and gill.

This is Protein S100-Z from Danio rerio (Zebrafish).